A 263-amino-acid polypeptide reads, in one-letter code: 7beta-hydroxysteroid dehydrogenase (263 aa).

NADP(+) contacts are provided by residues 17-21, 40-41, and 66-67; these read TEGVG, RR, and DF. Tyr156 acts as the Proton acceptor in catalysis. NADP(+) is bound at residue Ser240.

Belongs to the short-chain dehydrogenases/reductases (SDR) family.

It catalyses the reaction a 7beta-hydroxysteroid + NADP(+) = a 7-oxosteroid + NADPH + H(+). The catalysed reaction is 7-oxolithocholate + NADPH + H(+) = ursodeoxycholate + NADP(+). 7beta-hydroxysteroid dehydrogenase that catalyzes the reduction of the 7-oxo group of 7-oxo-lithocholate (7-oxo-LCA), to yield ursodeoxycholate (UDCA). As R.gnavus is a common core bacterium of the human gut microbiota, this enzyme contributes to the formation of UDCA in the human colon. UDCA is regarded as a chemopreventive beneficial secondary bile acid due to its low hydrophobicity; it protects hepatocytes and bile duct epithelial cells against necrosis and apoptosis induced by more hydrophobic secondary bile acids like deoxycholate (DCA). This enzyme is also able to catalyze the reverse reaction in vitro, i.e. the oxidation of the 7beta-hydroxy group of UDCA to 7-oxo-LCA, but much less efficiently than the reduction reaction. The chain is 7beta-hydroxysteroid dehydrogenase from Mediterraneibacter gnavus (strain ATCC 29149 / DSM 114966 / JCM 6515 / VPI C7-9) (Ruminococcus gnavus).